The chain runs to 211 residues: ATP phosphoribosyltransferase (211 aa).

The protein belongs to the ATP phosphoribosyltransferase family. Short subfamily. As to quaternary structure, heteromultimer composed of HisG and HisZ subunits.

The protein localises to the cytoplasm. It catalyses the reaction 1-(5-phospho-beta-D-ribosyl)-ATP + diphosphate = 5-phospho-alpha-D-ribose 1-diphosphate + ATP. It participates in amino-acid biosynthesis; L-histidine biosynthesis; L-histidine from 5-phospho-alpha-D-ribose 1-diphosphate: step 1/9. Its function is as follows. Catalyzes the condensation of ATP and 5-phosphoribose 1-diphosphate to form N'-(5'-phosphoribosyl)-ATP (PR-ATP). Has a crucial role in the pathway because the rate of histidine biosynthesis seems to be controlled primarily by regulation of HisG enzymatic activity. The sequence is that of ATP phosphoribosyltransferase from Pseudomonas putida (strain ATCC 47054 / DSM 6125 / CFBP 8728 / NCIMB 11950 / KT2440).